A 447-amino-acid polypeptide reads, in one-letter code: Ribosomal protein uS12 methylthiotransferase RimO (447 aa).

Residues 4–114 (PKVGFVSLGC…VMEAVHEYVP (111 aa)) form the MTTase N-terminal domain. The [4Fe-4S] cluster site is built by Cys-13, Cys-49, Cys-78, Cys-147, Cys-151, and Cys-154. Positions 133-370 (LTPKHYAYLK…MQVQQEISAA (238 aa)) constitute a Radical SAM core domain. In terms of domain architecture, TRAM spans 373–443 (QKRIGQTMTV…EYDLFAKLIQ (71 aa)).

It belongs to the methylthiotransferase family. RimO subfamily. The cofactor is [4Fe-4S] cluster.

It is found in the cytoplasm. The catalysed reaction is L-aspartate(89)-[ribosomal protein uS12]-hydrogen + (sulfur carrier)-SH + AH2 + 2 S-adenosyl-L-methionine = 3-methylsulfanyl-L-aspartate(89)-[ribosomal protein uS12]-hydrogen + (sulfur carrier)-H + 5'-deoxyadenosine + L-methionine + A + S-adenosyl-L-homocysteine + 2 H(+). Its function is as follows. Catalyzes the methylthiolation of an aspartic acid residue of ribosomal protein uS12. The protein is Ribosomal protein uS12 methylthiotransferase RimO of Acinetobacter baylyi (strain ATCC 33305 / BD413 / ADP1).